The chain runs to 224 residues: Dehydration-responsive element-binding protein 1G (224 aa).

Polar residues predominate over residues 1 to 16; that stretch reads MDVSAALSSDYSSGTP. The segment at 1-46 is disordered; it reads MDVSAALSSDYSSGTPSPVAADADDGSSAYMTVSSAPPKRRAGRTK. Positions 54-111 form a DNA-binding region, AP2/ERF; it reads VFKGVRRRNPGRWVCEVREPHGKQRIWLGTFETAEMAARAHDVAALALRGRAACLNFA.

It belongs to the AP2/ERF transcription factor family. ERF subfamily.

Its subcellular location is the nucleus. Transcriptional activator that binds specifically to the DNA sequence 5'-[AG]CCGAC-3'. Binding to the C-repeat/DRE element mediates high salinity- and dehydration-inducible transcription. This is Dehydration-responsive element-binding protein 1G (DREB1G) from Oryza sativa subsp. indica (Rice).